The primary structure comprises 229 residues: Ras-like protein rasV (229 aa).

40-47 (GDGGVGKT) serves as a coordination point for GTP. The Effector region motif lies at 62–70 (YDPTIEDSY). Residues 87–91 (DTAGQ) and 146–149 (NKSD) contribute to the GTP site. Cys226 carries the cysteine methyl ester modification. Cys226 carries S-geranylgeranyl cysteine lipidation. A propeptide spans 227–229 (KVM) (removed in mature form).

This sequence belongs to the small GTPase superfamily. Ras family.

It is found in the cell membrane. The enzyme catalyses GTP + H2O = GDP + phosphate + H(+). Ras proteins bind GDP/GTP and possess intrinsic GTPase activity. The polypeptide is Ras-like protein rasV (rasV) (Dictyostelium discoideum (Social amoeba)).